The sequence spans 854 residues: Cell division control protein 24 (854 aa).

Residues Met1–Ser14 are compositionally biased toward polar residues. Residues Met1–Ser24 are disordered. Residues Pro135–Pro246 enclose the Calponin-homology (CH) domain. The DH domain maps to Glu278–Asn454. Residues Arg478 to His668 form the PH domain. Disordered stretches follow at residues Ile542 to Ile571 and Gln674 to Glu745. Over residues Ser682–His707 the composition is skewed to low complexity. Residues Ser761–Tyr854 enclose the PB1 domain.

In terms of assembly, interacts with AXL2.

Functionally, promotes the exchange of CDC42-bound GDP by GTP. Controls the polarity of calmodulin, and the calcium regulatory process of bud emergence. CDC24 may be involved in the initial selection and organization of the budding site. The sequence is that of Cell division control protein 24 (CDC24) from Saccharomyces cerevisiae (strain ATCC 204508 / S288c) (Baker's yeast).